The following is a 709-amino-acid chain: Elongation factor G (709 aa).

The 286-residue stretch at 10 to 295 (NQIRNIGIMA…AVVDYLPSPE (286 aa)) folds into the tr-type G domain. GTP contacts are provided by residues 19–26 (AHIDAGKT), 91–95 (DTPGH), and 145–148 (NKMD).

Belongs to the TRAFAC class translation factor GTPase superfamily. Classic translation factor GTPase family. EF-G/EF-2 subfamily.

It localises to the cytoplasm. In terms of biological role, catalyzes the GTP-dependent ribosomal translocation step during translation elongation. During this step, the ribosome changes from the pre-translocational (PRE) to the post-translocational (POST) state as the newly formed A-site-bound peptidyl-tRNA and P-site-bound deacylated tRNA move to the P and E sites, respectively. Catalyzes the coordinated movement of the two tRNA molecules, the mRNA and conformational changes in the ribosome. This is Elongation factor G from Bifidobacterium adolescentis (strain ATCC 15703 / DSM 20083 / NCTC 11814 / E194a).